Reading from the N-terminus, the 248-residue chain is Ribonuclease 3 (248 aa).

One can recognise an RNase III domain in the interval 16–145 (TEGLETSIGY…LLAAMYLDGG (130 aa)). Position 58 (Glu-58) interacts with Mg(2+). Residue Asp-62 is part of the active site. Asn-131 and Glu-134 together coordinate Mg(2+). Glu-134 is a catalytic residue. In terms of domain architecture, DRBM spans 172–241 (DFKTDFQELA…ARQCLERLET (70 aa)).

It belongs to the ribonuclease III family. Homodimer. It depends on Mg(2+) as a cofactor.

The protein resides in the cytoplasm. The enzyme catalyses Endonucleolytic cleavage to 5'-phosphomonoester.. In terms of biological role, digests double-stranded RNA. Involved in the processing of primary rRNA transcript to yield the immediate precursors to the large and small rRNAs (23S and 16S). Processes some mRNAs, and tRNAs when they are encoded in the rRNA operon. Processes pre-crRNA and tracrRNA of type II CRISPR loci if present in the organism. The chain is Ribonuclease 3 from Geobacter sulfurreducens (strain ATCC 51573 / DSM 12127 / PCA).